Reading from the N-terminus, the 514-residue chain is 2,3-bisphosphoglycerate-independent phosphoglycerate mutase (514 aa).

Residues Asp-14 and Ser-64 each coordinate Mn(2+). The Phosphoserine intermediate role is filled by Ser-64. Substrate contacts are provided by residues His-125, 155–156 (RD), Arg-187, Arg-193, 263–266 (RADR), and Lys-336. Mn(2+) is bound by residues Asp-403, His-407, Asp-444, His-445, and His-463.

Belongs to the BPG-independent phosphoglycerate mutase family. Monomer. Mn(2+) serves as cofactor.

The catalysed reaction is (2R)-2-phosphoglycerate = (2R)-3-phosphoglycerate. Its pathway is carbohydrate degradation; glycolysis; pyruvate from D-glyceraldehyde 3-phosphate: step 3/5. Catalyzes the interconversion of 2-phosphoglycerate and 3-phosphoglycerate. The polypeptide is 2,3-bisphosphoglycerate-independent phosphoglycerate mutase (Shewanella oneidensis (strain ATCC 700550 / JCM 31522 / CIP 106686 / LMG 19005 / NCIMB 14063 / MR-1)).